A 469-amino-acid polypeptide reads, in one-letter code: Putative multidrug resistance protein MdtD (469 aa).

13 helical membrane-spanning segments follow: residues 8–28 (LWIVAFGFFMQTLDTTIVNTA), 45–65 (SVIVSYVLTVAVMLPASGWLA), 68–88 (VGVKWVFFSAIILFTLGSLLC), 102–122 (VIQGIGGAMMVPVGRLTVMKI), 134–154 (FVTLPGQIGPLVGPALGGFLV), 161–181 (WIFLINLPVGVVGALATLWLM), 191–211 (FDISGFIMLAIGMATLTLALD), 215–235 (GLGLPPLAIAGLILCGILALA), 263–283 (LIGSMSARIGSGMLPFMTPVF), 286–306 (IGLGFTPFHAGLMMIPMIIGS), 338–358 (LSFPLVALMGWTLLLPIVLFF), 392–412 (MVMQLSMSLGVSTAGILLGVF), and 426–446 (SAFLYSYICMAIIIALPALIF).

This sequence belongs to the major facilitator superfamily. TCR/Tet family.

It is found in the cell inner membrane. The sequence is that of Putative multidrug resistance protein MdtD from Yersinia enterocolitica serotype O:8 / biotype 1B (strain NCTC 13174 / 8081).